The sequence spans 1239 residues: Potassium channel subfamily T member 1 (1239 aa).

The disordered stretch occupies residues 1–45; it reads MARAKLPRSPSEGKAGPGDTPAGSAAPEEPHGLSPLLPTRGGGSV. At 1–93 the chain is on the cytoplasmic side; it reads MARAKLPRSP…LFFIKNQRSS (93 aa). A helical transmembrane segment spans residues 94–126; that stretch reads LRIRLFNFSLKLLTCLLYIVRVLLDNPDQGIGC. Residues 127-153 are Extracellular-facing; the sequence is WGCTKYNYTFNGSSSEFHWAPILWVER. Residues Asn133 and Asn137 are each glycosylated (N-linked (GlcNAc...) asparagine). The helical transmembrane segment at 154–178 threads the bilayer; sequence KMALWVIQVIVATISFLETMLLIYL. The Cytoplasmic segment spans residues 179-192; sequence SYKGNIWEQIFHVS. Residues 193–208 form a helical membrane-spanning segment; that stretch reads FVLEMINTLPFIITVF. Residues 209–215 are Extracellular-facing; the sequence is WPPLRNL. The helical transmembrane segment at 216–233 threads the bilayer; sequence FIPVFLNCWLAKHALENM. Residues 234 to 246 are Cytoplasmic-facing; that stretch reads INDFHRAILRTQS. A helical transmembrane segment spans residues 247–274; it reads AMFNQVLILFCTLLCLVFTGTCGIQHLE. The Extracellular portion of the chain corresponds to 275–281; the sequence is RAGGNLN. An intramembrane region (pore-forming) is located at residues 282–302; it reads LLTSFYFCIVTFSTVGFGDVT. K(+)-binding residues include Val296 and Gly297. The Extracellular portion of the chain corresponds to 303 to 304; the sequence is PK. The helical transmembrane segment at 305–338 threads the bilayer; it reads IWPSQLLVVILICVTLVVLPLQFEELVYLWMERQ. Topologically, residues 339-1239 are cytoplasmic; the sequence is KSGGNYSRHR…NPETRDETQL (901 aa). In terms of domain architecture, RCK N-terminal 1 spans 352–488; the sequence is EKHVVLCVSS…FHVKFADHVV (137 aa). Na(+) contacts are provided by Leu513, His516, Ser538, and Asn540. The disordered stretch occupies residues 658-689; that stretch reads QNTDCRPSQGGSGGGGGKLTLPTENGSGSRRP. Zn(2+) contacts are provided by Cys758 and Cys759. K(+)-binding residues include Arg761 and Lys764. 2 residues coordinate Na(+): Arg761 and Lys764. Residues Cys766 and His768 each contribute to the Zn(2+) site. Asn769, Tyr771, Tyr777, and Gly778 together coordinate K(+). Residue Tyr771 participates in Na(+) binding. Phe779 contributes to the Na(+) binding site. In terms of domain architecture, RCK N-terminal 2 spans 781–921; the sequence is NKLIIVSAET…QFRAKDSYSL (141 aa). Residues Ser787, Leu818, Asp820, Gly842, and Asp865 each coordinate K(+). Disordered regions lie at residues 1053–1081 and 1212–1239; these read REAKGPWGTRAASGGGSTHGRHGGSADPV and TSSSQSRKSSCSNKLSSCNPETRDETQL. The span at 1213 to 1230 shows a compositional bias: low complexity; it reads SSSQSRKSSCSNKLSSCN.

It belongs to the potassium channel family. Calcium-activated (TC 1.A.1.3) subfamily. KCa4.1/KCNT1 sub-subfamily. Homotetramer; which constitutes the Na(+)-activated K(+) channel. Interacts with KCNT2; these heterodimer channels differ from the homomers in their unitary conductance, kinetic behavior, subcellular localization, and response to activation of protein kinase C. Interacts (via C-terminus) with FMR1; this interaction alters gating properties of KCNT1. Interacts with CRBN via its cytoplasmic C-terminus. In terms of assembly, does not interact with KCNT2. Post-translationally, phosphorylated by protein kinase C. Phosphorylation of the C-terminal domain increases channel activity. Detected in brain and brainstem, in vestibular and oculomotor nuclei, the medial nucleus of the trapezoid in the auditory system, in olfactory bulb, red nucleus, and deep cerebellar nuclei. Detected in thalamus, substantia nigra, and amygdala (at protein level). Highly expressed in the brain and kidney.

The protein localises to the cell membrane. It carries out the reaction K(+)(in) = K(+)(out). With respect to regulation, activated by high intracellular Na(+) level. In addition to activation by Na(+), is cooperatively activated by intracellular Cl(-) levels. Activated upon stimulation of G-protein coupled receptors, such as CHRM1 and GRIA1. Its function is as follows. Sodium-activated K(+) channel. Acts as an important mediator of neuronal membrane excitability. Contributes to the delayed outward currents. Regulates neuronal bursting in sensory neurons. Contributes to synaptic development and plasticity. The chain is Potassium channel subfamily T member 1 (Kcnt1) from Rattus norvegicus (Rat).